A 349-amino-acid polypeptide reads, in one-letter code: Ureidoglycolate dehydrogenase (NAD(+)) (349 aa).

Catalysis depends on histidine 116, which acts as the Proton acceptor. Residues serine 140, 174–176 (DMA), lysine 224, and 306–308 (GQD) each bind NAD(+).

This sequence belongs to the LDH2/MDH2 oxidoreductase family. Homodimer.

The protein resides in the cytoplasm. It catalyses the reaction (S)-ureidoglycolate + NAD(+) = N-carbamoyl-2-oxoglycine + NADH + H(+). It functions in the pathway nitrogen metabolism; (S)-allantoin degradation; oxalurate from (S)-ureidoglycolate: step 1/1. Its function is as follows. AllD plays a pivotal role as a metabolic branch-point enzyme in nitrogen utilization via the assimilation of allantoin. It is able to utilize allantoin as a sole source of nitrogen under anaerobic conditions. Catalyzes the oxidation of ureidoglycolate to oxalurate. This is Ureidoglycolate dehydrogenase (NAD(+)) from Escherichia coli O157:H7.